Consider the following 156-residue polypeptide: MALEKSLVLLPLLVLALLVLGWIQPSLGKESRAMKFQRQHMDPGSSSSSSSTYCNQMMRRRNMTNGWCKPVNTFVHEPLVDVQAICFQENVTCKNGQTNCYKSNSTMHITDCRLTGSSKYPNCAYRTSQKERRIIVACEGSPYVPVHFDASVEDST.

The first 28 residues, Met1–Gly28, serve as a signal peptide directing secretion. Lys35 and Arg38 together coordinate substrate. Residue His40 is the Proton acceptor of the active site. Disulfide bonds link Cys54–Cys112, Cys68–Cys123, Cys86–Cys138, and Cys93–Cys100. N-linked (GlcNAc...) asparagine glycosylation occurs at Asn62. Position 69-73 (Lys69–Thr73) interacts with substrate. The N-linked (GlcNAc...) asparagine glycan is linked to Asn90. Lys94 lines the substrate pocket. N-linked (GlcNAc...) asparagine glycosylation occurs at Asn104. Substrate is bound at residue Arg113. Residue His147 is the Proton donor of the active site.

Belongs to the pancreatic ribonuclease family. Monomer. Interacts with and forms tight 1:1 complexes with RNH1. Dimerization of two such complexes may occur. Interaction with RNH1 inhibits this protein.

It localises to the secreted. The catalysed reaction is an [RNA] containing cytidine + H2O = an [RNA]-3'-cytidine-3'-phosphate + a 5'-hydroxy-ribonucleotide-3'-[RNA].. The enzyme catalyses an [RNA] containing uridine + H2O = an [RNA]-3'-uridine-3'-phosphate + a 5'-hydroxy-ribonucleotide-3'-[RNA].. In terms of biological role, endonuclease that catalyzes the cleavage of RNA on the 3' side of pyrimidine nucleotides. Acts on single-stranded and double-stranded RNA. The sequence is that of Ribonuclease pancreatic (RNASE1) from Lemur catta (Ring-tailed lemur).